Consider the following 1365-residue polypeptide: ATP-dependent RNA helicase DHX29 (1365 aa).

Residues 1–10 (MGGKNKKHKA) show a composition bias toward basic residues. 3 disordered regions span residues 1–74 (MGGK…NDSG), 174–222 (SQEF…EETT), and 235–257 (AEQQ…EKFD). Composition is skewed to low complexity over residues 11–36 (PGAA…VGEA) and 43–53 (ARPAPAVPTGA). Ser-69, Ser-190, and Ser-198 each carry phosphoserine. Positions 187 to 203 (KFQSVQIQATLSPPQQT) are enriched in polar residues. Positions 206-222 (KRQEEDPKIKPKKEETT) are enriched in basic and acidic residues. Residues 281 to 308 (LEKNKQGQKEAQEKIRKFQREMETLEDH) adopt a coiled-coil conformation. Residues 500–524 (QQQQQQQQRPESEKGGSEDPEESWE) are disordered. The 174-residue stretch at 581-754 (VETLKRHRVV…FTHCPILRIS (174 aa)) folds into the Helicase ATP-binding domain. ATP is bound at residue 594 to 601 (GETGSGKS). The DEAH box signature appears at 701–704 (DEVH). Positions 848–1025 (LILELLVYLD…ELCLHIMKCD (178 aa)) constitute a Helicase C-terminal domain.

It belongs to the DEAD box helicase family. DEAH subfamily. In terms of assembly, part of the 43S pre-initiation complex (PIC) that contains at least Met-tRNA, EIF1, EIF1A (EIF1AX or EIF1AY), EIF2S1, EIF2S2, EIF2S3, EIF3A, EIF3B, EIF3C, EIF3D, EIF3E, EIF3F, EIF3G, EIF3H, EIF3I, EIF3J, EIF3K, EIF3L, EIF3M, DHX29 and the 40S ribosomal subunit.

The protein resides in the cytoplasm. The enzyme catalyses ATP + H2O = ADP + phosphate + H(+). Functionally, ATP-binding RNA helicase involved in translation initiation. Part of the 43S pre-initiation complex that is required for efficient initiation on mRNAs of higher eukaryotes with structured 5'-UTRs by promoting efficient NTPase-dependent 48S complex formation. Specifically binds to the 40S ribosome near the mRNA entrance. Does not possess a processive helicase activity. This Mus musculus (Mouse) protein is ATP-dependent RNA helicase DHX29.